The chain runs to 93 residues: UPF0367 protein ssl1972 (93 aa).

It belongs to the UPF0367 family.

The chain is UPF0367 protein ssl1972 from Synechocystis sp. (strain ATCC 27184 / PCC 6803 / Kazusa).